Here is a 97-residue protein sequence, read N- to C-terminus: Co-chaperonin GroES (97 aa).

Belongs to the GroES chaperonin family. In terms of assembly, heptamer of 7 subunits arranged in a ring. Interacts with the chaperonin GroEL.

It is found in the cytoplasm. Functionally, together with the chaperonin GroEL, plays an essential role in assisting protein folding. The GroEL-GroES system forms a nano-cage that allows encapsulation of the non-native substrate proteins and provides a physical environment optimized to promote and accelerate protein folding. GroES binds to the apical surface of the GroEL ring, thereby capping the opening of the GroEL channel. This chain is Co-chaperonin GroES, found in Edwardsiella ictaluri (strain 93-146).